A 564-amino-acid polypeptide reads, in one-letter code: Rhodopsin kinase GRK1 (564 aa).

An interaction with RCVRN region spans residues 1-15 (MDFGSLETVVANSAF). The tract at residues 1 to 189 (MDFGSLETVV…LEAQPIGEDW (189 aa)) is N-terminal. Ser5 carries the post-translational modification Phosphoserine. Thr8 bears the Phosphothreonine mark. A Phosphoserine; by PKA and autocatalysis modification is found at Ser21. The region spanning 58 to 175 (FDNLCSEQPI…LGSLYFLRFL (118 aa)) is the RGS domain. A Protein kinase domain is found at 190 to 455 (FLDFRVLGKG…CDALRANVLF (266 aa)). Residues 196 to 204 (LGKGGFGEV) and Lys219 each bind ATP. The active-site Proton acceptor is Asp317. The AGC-kinase C-terminal domain maps to 456–521 (KDISWRQLEA…GNCSIPWQEE (66 aa)). Positions 456-564 (KDISWRQLEA…TAKSGMCLIS (109 aa)) are C-terminal. Residue Ser491 is modified to Phosphoserine; by autocatalysis. A Phosphothreonine; by autocatalysis modification is found at Thr492. The residue at position 561 (Cys561) is a Cysteine methyl ester. Cys561 is lipidated: S-farnesyl cysteine. Positions 562–564 (LIS) are cleaved as a propeptide — removed in mature form.

The protein belongs to the protein kinase superfamily. AGC Ser/Thr protein kinase family. GPRK subfamily. In terms of assembly, interacts (via N-terminus) with RCVRN (via C-terminus); the interaction is Ca(2+)-dependent. Interacts (when prenylated) with PDE6D; this promotes release from membranes. May form a complex composed of RHO, GRK1 and RCVRN in a Ca(2+)-dependent manner; RCVRN prevents the interaction between GRK1 and RHO. Autophosphorylated, Ser-21 is a minor site of autophosphorylation compared to Ser-491 and Thr-492. Phosphorylation at Ser-21 is regulated by light and activated by cAMP. In terms of processing, farnesylation is required for full activity. In terms of tissue distribution, detected in retina (at protein level). Retina-specific. Expressed in rod and cone photoreceptor cells.

The protein resides in the membrane. The protein localises to the cell projection. It localises to the cilium. It is found in the photoreceptor outer segment. The catalysed reaction is L-threonyl-[rhodopsin] + ATP = O-phospho-L-threonyl-[rhodopsin] + ADP + H(+). It carries out the reaction L-seryl-[rhodopsin] + ATP = O-phospho-L-seryl-[rhodopsin] + ADP + H(+). Inhibited by RCVRN, which prevents the interaction between GRK1 and RHO. Inhibition is calcium-dependent. Functionally, retina-specific kinase involved in the signal turnoff via phosphorylation of rhodopsin (RHO), the G protein- coupled receptor that initiates the phototransduction cascade. This rapid desensitization is essential for scotopic vision and permits rapid adaptation to changes in illumination. May play a role in the maintenance of the outer nuclear layer in the retina. The chain is Rhodopsin kinase GRK1 from Rattus norvegicus (Rat).